Reading from the N-terminus, the 749-residue chain is Protein lin-54 homolog (749 aa).

Residue Lys139 forms a Glycyl lysine isopeptide (Lys-Gly) (interchain with G-Cter in SUMO2) linkage. 2 positions are modified to N6-acetyllysine: Lys244 and Lys249. 4 positions are modified to phosphoserine: Ser264, Ser282, Ser310, and Ser314. Lys357 is covalently cross-linked (Glycyl lysine isopeptide (Lys-Gly) (interchain with G-Cter in SUMO2)). Residues 521-634 enclose the CRC domain; it reads PRKPCNCTKS…KCIGCKNFEE (114 aa). Positions 523-536 are DNA-binding; the sequence is KPCNCTKSLCLKLY. Positions 525, 527, 532, 537, 539, 546, 549, 551, and 554 each coordinate Zn(2+). The tract at residues 583 to 596 is linker; sequence IGKGKEGESDRRHS. 9 residues coordinate Zn(2+): Cys599, Cys601, Cys606, Cys611, Cys613, Cys620, Cys624, Cys626, and Cys629. The DNA-binding stretch occupies residues 599-612; sequence CNCKRSGCLKNYCE. A Phosphoserine modification is found at Ser635. Glycyl lysine isopeptide (Lys-Gly) (interchain with G-Cter in SUMO2) cross-links involve residues Lys639, Lys659, and Lys661.

Belongs to the lin-54 family. As to quaternary structure, component of the DREAM complex (also named LINC complex) at least composed of E2F4, E2F5, LIN9, LIN37, LIN52, LIN54, MYBL1, MYBL2, RBL1, RBL2, RBBP4, RBL2, TFDP1 and TFDP2. The complex exists in quiescent cells where it represses cell cycle-dependent genes. It dissociates in S phase when LIN9, LIN37, LIN52 and LIN54 form a subcomplex that binds to MYBL2.

Its subcellular location is the nucleus. Its function is as follows. Component of the DREAM complex, a multiprotein complex that can both act as a transcription activator or repressor depending on the context. In G0 phase, the complex binds to more than 800 promoters and is required for repression of E2F target genes. In S phase, the complex selectively binds to the promoters of G2/M genes whose products are required for mitosis and participates in their cell cycle dependent activation. In the complex, acts as a DNA-binding protein that binds the promoter of CDK1 in a sequence-specific manner. Specifically recognizes the consensus motif 5'-TTYRAA-3' in target DNA. This Mus musculus (Mouse) protein is Protein lin-54 homolog (Lin54).